Consider the following 662-residue polypeptide: PsbB mRNA maturation factor Mbb1, chloroplastic (662 aa).

Residues 1–50 constitute a chloroplast transit peptide; the sequence is MSLVPFSQLWRGVRTRGPVEQASSSSSSSSSSRRTWYAPARSQTGVQVAA. Disordered regions lie at residues 14–38 and 75–101; these read RTRG…TWYA and IIAD…RDEA. Positions 23–32 are enriched in low complexity; sequence SSSSSSSSSS. Basic and acidic residues predominate over residues 88 to 101; sequence EGERGDATGSRDEA. TPR repeat units lie at residues 126–160, 161–194, 196–229, 231–263, 269–302, 305–338, 339–372, 373–406, 408–440, and 444–477; these read SRIR…DPAD, PRAY…TGNV, PYIW…DGTH, CAWH…CRRK, AYLY…AEGA, VALW…NPRS, RYVH…NPTD, PALY…DPSD, YMWQ…DPRS, and VYVF…DPKS. 2 disordered regions span residues 540-563 and 598-662; these read SDGN…EAAA and LPDF…RSMG.

As to quaternary structure, part of a 300 kDa complex that associates with RNA.

The protein localises to the plastid. It is found in the chloroplast stroma. Its function is as follows. Involved, directly or indirectly, in the processing of the chloroplast encoded psbB mRNA to its mature form, acting via the 5'-UTR of the psbB mRNA. This chain is PsbB mRNA maturation factor Mbb1, chloroplastic (MBB1), found in Chlamydomonas reinhardtii (Chlamydomonas smithii).